A 165-amino-acid chain; its full sequence is MPAENSFDIVSDFDQQELVNAVDQTLREVQTRYDLKDAGVTITLTKTELIIEADSEMSLRSVRDVLETKALRRKLSLKIFDYGKPTDASGGRVRQVVTLRRGIDSELAKKLSKMIRDRFPKVQPRIQGDSLRVAGKSRDELQAVIAFLREREGEIPVPLQMTNYR.

This sequence belongs to the YajQ family.

Functionally, nucleotide-binding protein. In Chloroflexus aurantiacus (strain ATCC 29364 / DSM 637 / Y-400-fl), this protein is Nucleotide-binding protein Chy400_2003.